A 312-amino-acid polypeptide reads, in one-letter code: Protein ABIL2 (312 aa).

The interval 173–287 (TIRETPPPPV…TEQQQPSKSK (115 aa)) is disordered. A compositionally biased stretch (low complexity) spans 183–199 (RKSTSQSSSPRQPPQRS). The segment covering 230–251 (SVATRKSASISRPTTPSKSRSI) has biased composition (polar residues). The span at 269–279 (AFEKDNQKETE) shows a compositional bias: basic and acidic residues.

It belongs to the ABI family. In terms of assembly, binds SCAR.

The protein resides in the cytoplasm. Its subcellular location is the cytoskeleton. Its function is as follows. Involved in regulation of actin and microtubule organization. Part of a WAVE complex that activates the Arp2/3 complex. This is Protein ABIL2 (ABIL2) from Arabidopsis thaliana (Mouse-ear cress).